The primary structure comprises 26 residues: Oxyopinin-3a (26 aa).

In terms of tissue distribution, expressed by the venom gland.

The protein resides in the secreted. May have cytolytic and antimicrobial activity. In Oxyopes takobius (Lynx spider), this protein is Oxyopinin-3a.